A 240-amino-acid polypeptide reads, in one-letter code: Uridylate kinase (240 aa).

An ATP-binding site is contributed by 12–15 (KLSG). G54 contacts UMP. Positions 55 and 59 each coordinate ATP. Residues D74 and 135 to 142 (TGNPFFTT) each bind UMP. Positions 162, 168, and 171 each coordinate ATP.

The protein belongs to the UMP kinase family. Homohexamer.

The protein resides in the cytoplasm. It catalyses the reaction UMP + ATP = UDP + ADP. Its pathway is pyrimidine metabolism; CTP biosynthesis via de novo pathway; UDP from UMP (UMPK route): step 1/1. With respect to regulation, inhibited by UTP. Catalyzes the reversible phosphorylation of UMP to UDP. This chain is Uridylate kinase, found in Xanthomonas euvesicatoria pv. vesicatoria (strain 85-10) (Xanthomonas campestris pv. vesicatoria).